The following is a 185-amino-acid chain: Photosystem I assembly protein Ycf4 (185 aa).

2 consecutive transmembrane segments (helical) span residues 21 to 43 and 63 to 85; these read NFCW…TSSY and GLVM…CTIL.

It belongs to the Ycf4 family.

It is found in the plastid. Its subcellular location is the chloroplast thylakoid membrane. In terms of biological role, seems to be required for the assembly of the photosystem I complex. The protein is Photosystem I assembly protein Ycf4 of Brassica oleracea (Wild cabbage).